Here is a 417-residue protein sequence, read N- to C-terminus: Gamma-glutamyl phosphate reductase (417 aa).

The protein belongs to the gamma-glutamyl phosphate reductase family.

Its subcellular location is the cytoplasm. It carries out the reaction L-glutamate 5-semialdehyde + phosphate + NADP(+) = L-glutamyl 5-phosphate + NADPH + H(+). It functions in the pathway amino-acid biosynthesis; L-proline biosynthesis; L-glutamate 5-semialdehyde from L-glutamate: step 2/2. Functionally, catalyzes the NADPH-dependent reduction of L-glutamate 5-phosphate into L-glutamate 5-semialdehyde and phosphate. The product spontaneously undergoes cyclization to form 1-pyrroline-5-carboxylate. The polypeptide is Gamma-glutamyl phosphate reductase (Legionella pneumophila (strain Paris)).